Reading from the N-terminus, the 412-residue chain is Tyrosine--tRNA ligase (412 aa).

Residues 50-59 carry the 'HIGH' region motif; the sequence is PTGTDIHLGH. Positions 244-248 match the 'KMSKS' region motif; that stretch reads KMSKS. Lys-247 is an ATP binding site. Residues 348–411 enclose the S4 RNA-binding domain; sequence VKFFYLLSSL…IGKKIIKRFE (64 aa).

This sequence belongs to the class-I aminoacyl-tRNA synthetase family. TyrS type 2 subfamily. As to quaternary structure, homodimer.

It is found in the cytoplasm. The catalysed reaction is tRNA(Tyr) + L-tyrosine + ATP = L-tyrosyl-tRNA(Tyr) + AMP + diphosphate + H(+). Functionally, catalyzes the attachment of tyrosine to tRNA(Tyr) in a two-step reaction: tyrosine is first activated by ATP to form Tyr-AMP and then transferred to the acceptor end of tRNA(Tyr). The sequence is that of Tyrosine--tRNA ligase from Prochlorococcus marinus (strain MIT 9312).